Consider the following 376-residue polypeptide: Glucose-1-phosphate adenylyltransferase (376 aa).

Alpha-D-glucose 1-phosphate is bound by residues Y101, G166, 181–182 (EK), and S192.

The protein belongs to the bacterial/plant glucose-1-phosphate adenylyltransferase family. As to quaternary structure, homotetramer.

The enzyme catalyses alpha-D-glucose 1-phosphate + ATP + H(+) = ADP-alpha-D-glucose + diphosphate. It participates in glycan biosynthesis; glycogen biosynthesis. Involved in the biosynthesis of ADP-glucose, a building block required for the elongation reactions to produce glycogen. Catalyzes the reaction between ATP and alpha-D-glucose 1-phosphate (G1P) to produce pyrophosphate and ADP-Glc. The protein is Glucose-1-phosphate adenylyltransferase of Bacillus cereus (strain ZK / E33L).